A 729-amino-acid chain; its full sequence is Fatty acid oxidation complex subunit alpha (729 aa).

Residues 1-189 (MLYKGDTLYL…KIGLVDGVVK (189 aa)) form an enoyl-CoA hydratase/isomerase region. Asp-296 contributes to the substrate binding site. The interval 311–729 (ETPKQAAVLG…ARPVGSLKTA (419 aa)) is 3-hydroxyacyl-CoA dehydrogenase. Residues Met-324, Asp-343, 400–402 (VVE), Lys-407, and Ser-429 each bind NAD(+). The active-site For 3-hydroxyacyl-CoA dehydrogenase activity is His-450. Asn-453 lines the NAD(+) pocket. Residues Asn-500 and Tyr-660 each contribute to the substrate site. Positions 707–729 (TRHNEPYYPPVEPARPVGSLKTA) are disordered.

This sequence in the N-terminal section; belongs to the enoyl-CoA hydratase/isomerase family. The protein in the C-terminal section; belongs to the 3-hydroxyacyl-CoA dehydrogenase family. As to quaternary structure, heterotetramer of two alpha chains (FadB) and two beta chains (FadA).

It carries out the reaction a (3S)-3-hydroxyacyl-CoA + NAD(+) = a 3-oxoacyl-CoA + NADH + H(+). It catalyses the reaction a (3S)-3-hydroxyacyl-CoA = a (2E)-enoyl-CoA + H2O. The enzyme catalyses a 4-saturated-(3S)-3-hydroxyacyl-CoA = a (3E)-enoyl-CoA + H2O. The catalysed reaction is (3S)-3-hydroxybutanoyl-CoA = (3R)-3-hydroxybutanoyl-CoA. It carries out the reaction a (3Z)-enoyl-CoA = a 4-saturated (2E)-enoyl-CoA. It catalyses the reaction a (3E)-enoyl-CoA = a 4-saturated (2E)-enoyl-CoA. Its pathway is lipid metabolism; fatty acid beta-oxidation. In terms of biological role, involved in the aerobic and anaerobic degradation of long-chain fatty acids via beta-oxidation cycle. Catalyzes the formation of 3-oxoacyl-CoA from enoyl-CoA via L-3-hydroxyacyl-CoA. It can also use D-3-hydroxyacyl-CoA and cis-3-enoyl-CoA as substrate. The protein is Fatty acid oxidation complex subunit alpha of Salmonella typhi.